The following is a 655-amino-acid chain: p-hydroxybenzoic acid efflux pump subunit AaeB (655 aa).

11 helical membrane-spanning segments follow: residues 13-33 (FAVK…HFQL), 38-58 (WAVL…GGEP), 69-89 (LRII…ISMI), 93-113 (LLMI…SSLV), 121-141 (WGLS…EPLL), 152-172 (EIVI…PRSI), 370-390 (LFWL…IAVV), 407-427 (FIYG…VIIP), 431-451 (QSML…GIEV), 459-479 (MGAL…TFHF), and 482-502 (FLDS…VILL).

The protein belongs to the aromatic acid exporter ArAE (TC 2.A.85) family.

The protein localises to the cell inner membrane. In terms of biological role, forms an efflux pump with AaeA. Could function as a metabolic relief valve, allowing to eliminate certain compounds when they accumulate to high levels in the cell. In Salmonella dublin (strain CT_02021853), this protein is p-hydroxybenzoic acid efflux pump subunit AaeB.